Consider the following 157-residue polypeptide: Protein Smg homolog (157 aa).

It belongs to the Smg family.

This chain is Protein Smg homolog, found in Shewanella sediminis (strain HAW-EB3).